The following is a 323-amino-acid chain: Acetyl-coenzyme A carboxylase carboxyl transferase subunit alpha (323 aa).

The region spanning 39–293 (RLAGKSQQLT…KRSLAESLRQ (255 aa)) is the CoA carboxyltransferase C-terminal domain.

It belongs to the AccA family. Acetyl-CoA carboxylase is a heterohexamer composed of biotin carboxyl carrier protein (AccB), biotin carboxylase (AccC) and two subunits each of ACCase subunit alpha (AccA) and ACCase subunit beta (AccD).

It is found in the cytoplasm. It catalyses the reaction N(6)-carboxybiotinyl-L-lysyl-[protein] + acetyl-CoA = N(6)-biotinyl-L-lysyl-[protein] + malonyl-CoA. The protein operates within lipid metabolism; malonyl-CoA biosynthesis; malonyl-CoA from acetyl-CoA: step 1/1. Functionally, component of the acetyl coenzyme A carboxylase (ACC) complex. First, biotin carboxylase catalyzes the carboxylation of biotin on its carrier protein (BCCP) and then the CO(2) group is transferred by the carboxyltransferase to acetyl-CoA to form malonyl-CoA. This Cupriavidus pinatubonensis (strain JMP 134 / LMG 1197) (Cupriavidus necator (strain JMP 134)) protein is Acetyl-coenzyme A carboxylase carboxyl transferase subunit alpha.